We begin with the raw amino-acid sequence, 72 residues long: Alpha-elapitoxin-Dpp2c (72 aa).

Cystine bridges form between cysteine 3-cysteine 21, cysteine 14-cysteine 42, cysteine 27-cysteine 31, cysteine 46-cysteine 57, and cysteine 58-cysteine 63.

Belongs to the three-finger toxin family. Long-chain subfamily. Type II alpha-neurotoxin sub-subfamily. Expressed by the venom gland.

The protein resides in the secreted. Functionally, binds with high affinity to muscular (alpha-1/CHRNA1) and neuronal (alpha-7/CHRNA7) nicotinic acetylcholine receptor (nAChR) and inhibits acetylcholine from binding to the receptor, thereby impairing neuromuscular and neuronal transmission. The polypeptide is Alpha-elapitoxin-Dpp2c (Dendroaspis polylepis polylepis (Black mamba)).